A 94-amino-acid chain; its full sequence is Small ribosomal subunit protein uS19 (94 aa).

It belongs to the universal ribosomal protein uS19 family.

Protein S19 forms a complex with S13 that binds strongly to the 16S ribosomal RNA. This chain is Small ribosomal subunit protein uS19, found in Acidobacterium capsulatum (strain ATCC 51196 / DSM 11244 / BCRC 80197 / JCM 7670 / NBRC 15755 / NCIMB 13165 / 161).